The following is a 377-amino-acid chain: Protein-tyrosine sulfotransferase 2 (377 aa).

The Cytoplasmic segment spans residues 1-8 (MRLSVRRV). A helical; Signal-anchor for type II membrane protein transmembrane segment spans residues 9 to 25 (LLAAGCALVLVLAVQLG). Over 26–377 (QQVLECRAVL…NSTSSHLGSS (352 aa)) the chain is Lumenal. 3'-phosphoadenylyl sulfate is bound at residue 78 to 82 (RSGTT). A disulfide bridge connects residues Cys96 and Cys156. The Proton donor/acceptor role is filled by Glu99. Positions 101–105 (RIIPR) are interaction with peptide substrate. The 3'-phosphoadenylyl sulfate site is built by Arg183, Ser191, and Arg195. Cys225 and Cys233 are joined by a disulfide. Residues Tyr238, 285–294 (STDQVIKPVN), and Lys300 each bind 3'-phosphoadenylyl sulfate. N-linked (GlcNAc...) asparagine glycans are attached at residues Asn343 and Asn368.

It belongs to the protein sulfotransferase family. Homodimer. Can also form heterodimers with TPST1. N-glycosylated. As to expression, widely expressed.

The protein resides in the golgi apparatus membrane. It carries out the reaction L-tyrosyl-[protein] + 3'-phosphoadenylyl sulfate = O-sulfo-L-tyrosine-[protein] + adenosine 3',5'-bisphosphate + H(+). Its function is as follows. Catalyzes the O-sulfation of tyrosine residues within acidic motifs of polypeptides, using 3'-phosphoadenylyl sulfate (PAPS) as cosubstrate. This is Protein-tyrosine sulfotransferase 2 (TPST2) from Homo sapiens (Human).